The following is a 56-amino-acid chain: Large ribosomal subunit protein bL33 (56 aa).

The protein belongs to the bacterial ribosomal protein bL33 family.

The chain is Large ribosomal subunit protein bL33 from Nocardioides sp. (strain ATCC BAA-499 / JS614).